The primary structure comprises 157 residues: 6,7-dimethyl-8-ribityllumazine synthase (157 aa).

Residues F24, 56-58 (SFE), and 79-81 (VLI) contribute to the 5-amino-6-(D-ribitylamino)uracil site. (2S)-2-hydroxy-3-oxobutyl phosphate is bound at residue 84 to 85 (ET). H87 functions as the Proton donor in the catalytic mechanism. 5-amino-6-(D-ribitylamino)uracil is bound at residue F112. R126 is a (2S)-2-hydroxy-3-oxobutyl phosphate binding site.

It belongs to the DMRL synthase family.

The catalysed reaction is (2S)-2-hydroxy-3-oxobutyl phosphate + 5-amino-6-(D-ribitylamino)uracil = 6,7-dimethyl-8-(1-D-ribityl)lumazine + phosphate + 2 H2O + H(+). It participates in cofactor biosynthesis; riboflavin biosynthesis; riboflavin from 2-hydroxy-3-oxobutyl phosphate and 5-amino-6-(D-ribitylamino)uracil: step 1/2. Functionally, catalyzes the formation of 6,7-dimethyl-8-ribityllumazine by condensation of 5-amino-6-(D-ribitylamino)uracil with 3,4-dihydroxy-2-butanone 4-phosphate. This is the penultimate step in the biosynthesis of riboflavin. The chain is 6,7-dimethyl-8-ribityllumazine synthase from Pyrococcus furiosus (strain ATCC 43587 / DSM 3638 / JCM 8422 / Vc1).